The primary structure comprises 333 residues: Taste receptor type 2 member 38 (333 aa).

Topologically, residues 1–17 (MLTLTRICAVSYEVRST) are extracellular. A helical transmembrane segment spans residues 18-38 (FLFISVLEFAVGFLTNAFIFL). Residues 39-55 (VNFWDVVKRQPLSNSDC) lie on the Cytoplasmic side of the membrane. A helical transmembrane segment spans residues 56–76 (VLLCLSISRLFLHGLLFLSAI). The Extracellular portion of the chain corresponds to 77 to 94 (QLTHFQKLSEPLNHSYQA). Residues 95–115 (IIMLWIIANQANLWLAACLSL) traverse the membrane as a helical segment. At 116–142 (LYCSKLIRFSHTFLICLASWVSRKISQ) the chain is on the cytoplasmic side. Residues 143-163 (MLLGIILCSCICTVLCVWCFF) form a helical membrane-spanning segment. The Extracellular portion of the chain corresponds to 164–190 (SRPHFTVTTFLFMNNNTRLNWQIKDLN). Residue asparagine 178 is glycosylated (N-linked (GlcNAc...) asparagine). A helical transmembrane segment spans residues 191-211 (LFYSFLFCYLWSVPPFLLFLV). The Cytoplasmic portion of the chain corresponds to 212–251 (SSGMLTVSLGRHMRTMKVYTRDSRDPSLEAHIKALKSLVS). The chain crosses the membrane as a helical span at residues 252–272 (FFCFFVISSCAAFISVPLLIL). The Extracellular portion of the chain corresponds to 273-276 (WRNK). A helical transmembrane segment spans residues 277 to 297 (IGVMVCVGIMAACPSGHAAVL). At 298-333 (ISGNATLRRAVTTILLWAQSSMKVRADHKADSRTLC) the chain is on the cytoplasmic side.

It belongs to the G-protein coupled receptor T2R family.

The protein resides in the membrane. Receptor that may play a role in the perception of bitterness and is gustducin-linked. May play a role in sensing the chemical composition of the gastrointestinal content. The activity of this receptor may stimulate alpha gustducin, mediate PLC-beta-2 activation and lead to the gating of TRPM5. The protein is Taste receptor type 2 member 38 (TAS2R38) of Pongo pygmaeus (Bornean orangutan).